The sequence spans 170 residues: Probable chemoreceptor glutamine deamidase CheD (170 aa).

It belongs to the CheD family.

The enzyme catalyses L-glutaminyl-[protein] + H2O = L-glutamyl-[protein] + NH4(+). Functionally, probably deamidates glutamine residues to glutamate on methyl-accepting chemotaxis receptors (MCPs), playing an important role in chemotaxis. The chain is Probable chemoreceptor glutamine deamidase CheD from Maridesulfovibrio salexigens (strain ATCC 14822 / DSM 2638 / NCIMB 8403 / VKM B-1763) (Desulfovibrio salexigens).